We begin with the raw amino-acid sequence, 1170 residues long: MRLSSIKLAGFKSFVDPTHFQVPGQLVGVVGPNGCGKSNIIDAVRWVLGESRASELRGESMQDVIFNGSTTRKPGSRASVELIFDNSDGRAAGQWGQYGEIAVKRVLTRDGTSSYYINNLPARRRDIQDIFLGTGLGPRAYAIIGQGMIARIIEAKPEELRVFLEEAAGVSKYKERRRETENRLHDTRENLTRVEDIVRELGANLEKLEAQAVVATKYKELVADGEEKQRLLWLLRKNEAAAEQDRQRRAIGDAQIELDAQTAKLREVEAQLETLRVAHYSASDAMQGAQGALYEANAEVSRLEAQIKFIVESRNRVQAQIAALVAQQEQWRAQADKAQGDLEVAEEARAVADEKAAIAEDDAAAKHDALPALEARWRDAQTGLNDERGRIAQTEQALKLEAAHQRNADQQLQQLQQRHERLKVEAGGLDAPDEAQLEELRMQLAEHEAMLAEAQARLADAQEALPRLDAQRRAAHERVQAESAQIHQLEARLAALKQLQENVQTQGKIQPWLDKHELGALPRLWKKLHVEAGWETALEAVLRERLAALEVSNLDWVKAFATDAPPAKLAFYAPPAAGEPLAAPGALRPLLPLVRIDDAGLRAVLNDWLGTVFVADDLAQALAARMQLPQGGAFVVKAGHVVTRSGVQLYAADSEQAGMLARAQEIENLTRQVRAQALLSDEAKAAAIRAEAAHTQASQALTEVRAQAERATQRVHALQMDVLKLTQAHERYTQRSTQIREELEEIGAQIEEQRALRAESEANFERHDAELAELQARFEDNQLAFESLDETLTNARQEARERERAATDARFAARQSANRIDELKRSIQVAHEQAERVAASLEDARAELETINEQTAHTGLQDALEVRAAKEQALGAARAELDDLTAKLRAADEARLAAERSLQPLRDRITELQLKEQAARMTGEQFAEQLATAEVDEAALKEKLMPDMKPSYLQGEVTRINNAINALGPVNMAALDELAAASERKVFLDAQSADLTNAIETLEDAIRKIDQETRALLQATFDEVNRHFSDLFPRLFGGGQAKLIMTGDEILDAGVQVMAQPPGKKNATIHLLSGGEKALTATALVFAMFQLNPAPFCLLDEVDAPLDDANTERFANLVRAMSDKTQFLFISHNKIAMEMAQQLIGVTMQEQGVSRIVAVDMETAAGFAQN.

32–39 is an ATP binding site; sequence PNGCGKSN. Coiled coils occupy residues 169-215, 245-365, and 401-508; these read GVSK…AVVA, DRQR…DAAA, and EAAH…TQGK. Residues 520–623 enclose the SMC hinge domain; the sequence is ALPRLWKKLH…VADDLAQALA (104 aa). 2 coiled-coil regions span residues 664-944 and 983-1020; these read QEIE…KEKL and ERKVFLDAQSADLTNAIETLEDAIRKIDQETRALLQAT.

This sequence belongs to the SMC family. In terms of assembly, homodimer.

It localises to the cytoplasm. Functionally, required for chromosome condensation and partitioning. The sequence is that of Chromosome partition protein Smc from Burkholderia pseudomallei (strain 1710b).